The following is a 296-amino-acid chain: Tyrosine recombinase XerC (296 aa).

The 84-residue stretch at 1–84 (MDKIQETFLY…TLRTFYEFWM (84 aa)) folds into the Core-binding (CB) domain. One can recognise a Tyr recombinase domain in the interval 105–286 (YLPQFFYEEE…SNQQLRKVYL (182 aa)). Residues R145, K169, H238, R241, and H264 contribute to the active site. Y273 acts as the O-(3'-phospho-DNA)-tyrosine intermediate in catalysis.

Belongs to the 'phage' integrase family. XerC subfamily. Forms a cyclic heterotetrameric complex composed of two molecules of XerC and two molecules of XerD.

It localises to the cytoplasm. Site-specific tyrosine recombinase, which acts by catalyzing the cutting and rejoining of the recombining DNA molecules. The XerC-XerD complex is essential to convert dimers of the bacterial chromosome into monomers to permit their segregation at cell division. It also contributes to the segregational stability of plasmids. The chain is Tyrosine recombinase XerC from Staphylococcus epidermidis (strain ATCC 35984 / DSM 28319 / BCRC 17069 / CCUG 31568 / BM 3577 / RP62A).